Consider the following 293-residue polypeptide: ATP phosphoribosyltransferase (293 aa).

The protein belongs to the ATP phosphoribosyltransferase family. Long subfamily. Requires Mg(2+) as cofactor.

The protein resides in the cytoplasm. The catalysed reaction is 1-(5-phospho-beta-D-ribosyl)-ATP + diphosphate = 5-phospho-alpha-D-ribose 1-diphosphate + ATP. It participates in amino-acid biosynthesis; L-histidine biosynthesis; L-histidine from 5-phospho-alpha-D-ribose 1-diphosphate: step 1/9. Feedback inhibited by histidine. Functionally, catalyzes the condensation of ATP and 5-phosphoribose 1-diphosphate to form N'-(5'-phosphoribosyl)-ATP (PR-ATP). Has a crucial role in the pathway because the rate of histidine biosynthesis seems to be controlled primarily by regulation of HisG enzymatic activity. This is ATP phosphoribosyltransferase from Nitratidesulfovibrio vulgaris (strain DSM 19637 / Miyazaki F) (Desulfovibrio vulgaris).